Reading from the N-terminus, the 198-residue chain is Probable GTP-binding protein EngB (198 aa).

Positions 22–195 (HRNEVAFVGR…IDKLFLEFAT (174 aa)) constitute an EngB-type G domain. GTP contacts are provided by residues 30-37 (GRSNVGKS), 57-61 (GKTRL), 75-78 (DLPG), 142-145 (TKSD), and 174-176 (YSS). Residues S37 and T59 each coordinate Mg(2+).

It belongs to the TRAFAC class TrmE-Era-EngA-EngB-Septin-like GTPase superfamily. EngB GTPase family. Mg(2+) serves as cofactor.

Necessary for normal cell division and for the maintenance of normal septation. This chain is Probable GTP-binding protein EngB, found in Clostridium botulinum (strain Eklund 17B / Type B).